The sequence spans 58 residues: Conotoxin Leo-T2 (58 aa).

A signal peptide spans 1–22 (MRCLPVFIILPLLIPSAPSVDA). Residues 23–47 (QPMTEDDVPLASFHEQTLQELWNKR) constitute a propeptide that is removed on maturation.

It belongs to the conotoxin T superfamily. In terms of processing, contains 2 disulfide bonds that can be either 'C1-C3, C2-C4' or 'C1-C4, C2-C3', since these disulfide connectivities have been observed for conotoxins with cysteine framework V (for examples, see AC P0DQQ7 and AC P81755). As to expression, expressed by the venom duct.

The protein localises to the secreted. In Conus leopardus (Leopard cone), this protein is Conotoxin Leo-T2.